The following is a 568-amino-acid chain: Sulfite reductase [NADPH] hemoprotein beta-component (568 aa).

The [4Fe-4S] cluster site is built by C425, C431, C470, and C474. A siroheme-binding site is contributed by C474.

This sequence belongs to the nitrite and sulfite reductase 4Fe-4S domain family. As to quaternary structure, alpha(8)-beta(8). The alpha component is a flavoprotein, the beta component is a hemoprotein. Siroheme is required as a cofactor. Requires [4Fe-4S] cluster as cofactor.

It carries out the reaction hydrogen sulfide + 3 NADP(+) + 3 H2O = sulfite + 3 NADPH + 4 H(+). It functions in the pathway sulfur metabolism; hydrogen sulfide biosynthesis; hydrogen sulfide from sulfite (NADPH route): step 1/1. Functionally, component of the sulfite reductase complex that catalyzes the 6-electron reduction of sulfite to sulfide. This is one of several activities required for the biosynthesis of L-cysteine from sulfate. This chain is Sulfite reductase [NADPH] hemoprotein beta-component, found in Xanthomonas campestris pv. campestris (strain B100).